Here is a 125-residue protein sequence, read N- to C-terminus: Large ribosomal subunit protein bL12 (125 aa).

The protein belongs to the bacterial ribosomal protein bL12 family. In terms of assembly, homodimer. Part of the ribosomal stalk of the 50S ribosomal subunit. Forms a multimeric L10(L12)X complex, where L10 forms an elongated spine to which 2 to 4 L12 dimers bind in a sequential fashion. Binds GTP-bound translation factors.

Functionally, forms part of the ribosomal stalk which helps the ribosome interact with GTP-bound translation factors. Is thus essential for accurate translation. In Liberibacter africanus (Citrus greening disease), this protein is Large ribosomal subunit protein bL12.